Reading from the N-terminus, the 269-residue chain is Cytolethal distending toxin subunit B homolog (269 aa).

Positions 1–22 (MKKPVFFLLTMIICSYISFACA) are cleaved as a signal peptide.

It is found in the secreted. Functionally, produces a CDT (cytolethal distending toxin) activity, which causes DNA damage in intoxicated cells. This damage induces G2/M cell cycle arrest, chromatin fragmentation, cell distention and nucleus enlargement. In Salmonella typhi, this protein is Cytolethal distending toxin subunit B homolog (cdtB).